The sequence spans 456 residues: Exodeoxyribonuclease 7 large subunit (456 aa).

It belongs to the XseA family. In terms of assembly, heterooligomer composed of large and small subunits.

The protein resides in the cytoplasm. The catalysed reaction is Exonucleolytic cleavage in either 5'- to 3'- or 3'- to 5'-direction to yield nucleoside 5'-phosphates.. In terms of biological role, bidirectionally degrades single-stranded DNA into large acid-insoluble oligonucleotides, which are then degraded further into small acid-soluble oligonucleotides. This is Exodeoxyribonuclease 7 large subunit from Escherichia coli (strain SE11).